The chain runs to 282 residues: Glycine betaine/carnitine transport permease protein GbuB (282 aa).

6 helical membrane-spanning segments follow: residues 44–64 (VFDL…TFWV), 70–90 (KWGL…LDFW), 99–119 (LVLT…IWMA), 140–160 (AFVY…PGVV), 220–240 (IMLA…GLGT), and 251–271 (AGGG…LDRL). In terms of domain architecture, ABC transmembrane type-1 spans 93-272 (MTQTLTLVLT…IVAIILDRLT (180 aa)).

This sequence belongs to the binding-protein-dependent transport system permease family. In terms of assembly, the complex is composed of two ATP-binding proteins (GbuA), two transmembrane proteins (GbuB) and a solute-binding protein (GbuC).

It localises to the cell membrane. The complex is activated by an osmotic gradient or by low temperature. Functionally, part of the ABC transporter complex GbuABC involved in glycine betaine uptake. Responsible for the translocation of the substrate across the membrane. Involved, with BetL and OpuC, in osmoprotection and cryoprotection of Listeria. Can also uptake carnitine when carnitine is abundant in the growth medium. In Listeria monocytogenes serotype 1/2a (strain 10403S), this protein is Glycine betaine/carnitine transport permease protein GbuB (gbuB).